The sequence spans 748 residues: Serine/threonine-protein kinase CG17528 (748 aa).

Composition is skewed to polar residues over residues 22–35 (QASP…SVPS) and 47–59 (EKTN…QEDN). Disordered regions lie at residues 22-41 (QASP…NVVT) and 47-81 (EKTN…ELDD). Phosphoserine is present on residues serine 67, serine 70, serine 73, serine 87, serine 88, and serine 89. Threonine 91 is modified (phosphothreonine). Residue serine 93 is modified to Phosphoserine. The residue at position 100 (threonine 100) is a Phosphothreonine. Doublecortin domains follow at residues 158–244 (LRIK…VEYN) and 313–396 (RIVT…AEDF). In terms of domain architecture, Protein kinase spans 477 to 735 (YSLGRIIGDG…SEDILDHSWT (259 aa)). ATP is bound by residues 483 to 491 (IGDGNFAIV) and lysine 506. Aspartate 598 acts as the Proton acceptor in catalysis.

The protein belongs to the protein kinase superfamily. CAMK Ser/Thr protein kinase family. CaMK subfamily.

The catalysed reaction is L-seryl-[protein] + ATP = O-phospho-L-seryl-[protein] + ADP + H(+). It carries out the reaction L-threonyl-[protein] + ATP = O-phospho-L-threonyl-[protein] + ADP + H(+). This Drosophila melanogaster (Fruit fly) protein is Serine/threonine-protein kinase CG17528.